The following is a 377-amino-acid chain: Actin-related protein T2 (377 aa).

This sequence belongs to the actin family.

Its subcellular location is the cytoplasm. It is found in the cytoskeleton. The protein is Actin-related protein T2 (ACTRT2) of Bos taurus (Bovine).